A 498-amino-acid polypeptide reads, in one-letter code: Glycerol kinase (498 aa).

ADP is bound at residue Thr-14. ATP contacts are provided by Thr-14, Thr-15, and Ser-16. Thr-14 lines the sn-glycerol 3-phosphate pocket. Arg-18 provides a ligand contact to ADP. 3 residues coordinate sn-glycerol 3-phosphate: Arg-84, Glu-85, and Tyr-136. Positions 84, 85, and 136 each coordinate glycerol. His-232 is modified (phosphohistidine; by HPr). Position 246 (Asp-246) interacts with sn-glycerol 3-phosphate. Glycerol contacts are provided by Asp-246 and Gln-247. Residues Thr-268 and Gly-311 each coordinate ADP. ATP is bound by residues Thr-268, Gly-311, Gln-315, and Gly-412. ADP contacts are provided by Gly-412 and Asn-416.

Belongs to the FGGY kinase family. As to quaternary structure, homotetramer and homodimer (in equilibrium). Post-translationally, the phosphoenolpyruvate-dependent sugar phosphotransferase system (PTS), including enzyme I, and histidine-containing protein (HPr) are required for the phosphorylation, which leads to the activation of the enzyme.

The enzyme catalyses glycerol + ATP = sn-glycerol 3-phosphate + ADP + H(+). Its pathway is polyol metabolism; glycerol degradation via glycerol kinase pathway; sn-glycerol 3-phosphate from glycerol: step 1/1. Activated by phosphorylation and inhibited by fructose 1,6-bisphosphate (FBP). Its function is as follows. Key enzyme in the regulation of glycerol uptake and metabolism. Catalyzes the phosphorylation of glycerol to yield sn-glycerol 3-phosphate. In Lactococcus lactis subsp. lactis (strain IL1403) (Streptococcus lactis), this protein is Glycerol kinase.